The primary structure comprises 916 residues: Neurofilament medium polypeptide (916 aa).

Polar residues predominate over residues 1–10 (MSYTLDSLGN). Residues 1-51 (MSYTLDSLGNPSAYRRVTETRSSFSRVSGSPSSGFRSQSWSRGSPSTVSSS) are disordered. At Ser2 the chain carries N-acetylserine. The interval 2–104 (SYTLDSLGNP…KLSRSNEKEQ (103 aa)) is head. A compositionally biased stretch (low complexity) spans 21–44 (RSSFSRVSGSPSSGFRSQSWSRGS). At Ser30 the chain carries Phosphoserine. Arg42 carries the omega-N-methylarginine modification. Thr47 carries an O-linked (GlcNAc) threonine glycan. The residue at position 99 (Ser99) is a Phosphoserine. Residues 101–412 (EKEQLQGLND…KLLEGEETRF (312 aa)) form the IF rod domain. The tract at residues 105–136 (LQGLNDRFAGYIEKVHYLEQQNKEIEAEIQAL) is coil 1A. The tract at residues 137-149 (RQKQASHAQLGDA) is linker 1. The tract at residues 150-248 (YDQEIRELRA…EEEVADLLAQ (99 aa)) is coil 1B. Ser226 carries the phosphoserine modification. Residues 249 to 265 (IQASHITVERKDYLKTD) form a linker 12 region. Positions 266 to 287 (ISTALKEIRSQLESHSDQNMHQ) are coil 2A. The linker 2 stretch occupies residues 288–291 (AEEW). The coil 2B stretch occupies residues 292 to 412 (FKCRYAKLTE…KLLEGEETRF (121 aa)). Residue Tyr320 is modified to Phosphotyrosine. Phosphoserine is present on residues Ser346 and Ser418. The segment at 413-916 (STFAGSITGP…AIVKEVTQSD (504 aa)) is tail. The O-linked (GlcNAc) threonine glycan is linked to Thr431. Phosphoserine is present on residues Ser467 and Ser483. Residues 485–851 (KEEKKEAAEE…KKGGDKSEEK (367 aa)) are disordered. A compositionally biased stretch (acidic residues) spans 493-505 (EEKEEEPEAEEEE). At Ser511 the chain carries Phosphoserine. A compositionally biased stretch (acidic residues) spans 521 to 541 (KEEEGEKEEEEGQEEEEEEDE). A compositionally biased stretch (basic and acidic residues) spans 542–561 (GAKSDQAEEGGSEKEGSSEK). 4 positions are modified to phosphoserine: Ser545, Ser553, Ser558, and Ser559. Residues 562–582 (EEGEQEEGETEAEAEGEEAEA) show a composition bias toward acidic residues. A Phosphothreonine modification is found at Thr571. Residues 583–614 (KEEKKVEEKSEEVATKEELVADAKVEKPEKAK) are compositionally biased toward basic and acidic residues. Repeat copies occupy residues 614 to 626 (KSPV…EEKG), 627 to 639 (KSPV…EEKG), 640 to 652 (KSPV…EEKG), 653 to 665 (KSPV…EEKG), 666 to 678 (KSPV…EEKA), and 679 to 691 (KSPV…EEAK). The segment at 614-691 (KSPVPKSPVE…VPKSPVEEAK (78 aa)) is 6 X 13 AA approximate tandem repeats of K-S-P-V-[PS]-K-S-P-V-E-E-[KA]-[GAK]. Ser641 and Ser646 each carry phosphoserine. A phosphoserine mark is found at Ser680 and Ser685. Basic and acidic residues-rich tracts occupy residues 686 to 701 (PVEE…KGEQ), 707 to 742 (KEVK…KEEA), and 755 to 778 (VHLE…EKAG). Residue Ser736 is modified to Phosphoserine. A phosphoserine mark is found at Ser783, Ser821, and Ser837. Basic and acidic residues predominate over residues 788-828 (SDKGAKGSRKEDIAVNGEVEGKEEVEQETKEKGSGREEEKG). The segment covering 839–851 (ADEKKGGDKSEEK) has biased composition (basic and acidic residues).

It belongs to the intermediate filament family. Forms heterodimers with NEFL; which can further hetero-oligomerize (in vitro). Forms heterodimers with INA (in vitro). Post-translationally, there are a number of repeats of the tripeptide K-S-P, NFM is phosphorylated on a number of the serines in this motif. It is thought that phosphorylation of NFM results in the formation of interfilament cross bridges that are important in the maintenance of axonal caliber. Phosphorylation seems to play a major role in the functioning of the larger neurofilament polypeptides (NF-M and NF-H), the levels of phosphorylation being altered developmentally and coincidentally with a change in the neurofilament function. In terms of processing, phosphorylated in the head and rod regions by the PKC kinase PKN1, leading to the inhibition of polymerization.

The protein resides in the cytoplasm. It is found in the cytoskeleton. The protein localises to the cell projection. It localises to the axon. Functionally, neurofilaments usually contain three intermediate filament proteins: NEFL, NEFM, and NEFH which are involved in the maintenance of neuronal caliber. May additionally cooperate with the neuronal intermediate filament proteins PRPH and INA to form neuronal filamentous networks. The chain is Neurofilament medium polypeptide (NEFM) from Homo sapiens (Human).